Reading from the N-terminus, the 249-residue chain is MKKIEVRDLDLFYGEVQALKKINLDVEPNSVLALIGPSGCGKSTFIRTLNRMNDLIEGVKISGTVLLDGKDIYKEVDVIELRKKVGMVFQKPNPFPMTVYDNVAYGPRIHGIRDKRTLNEIVEKSLKAAALWDEVKDRLHHSALSLSGGQQQRLCIARTLAVEPEVILMDEPTSALDPISTMKIEELIEELKKKYTIIIVTHNMQQAGRVSDYTAFFLNGELVEWGPTDQVFYNPKDKRTEDYITGRFG.

Positions 4-244 (IEVRDLDLFY…PKDKRTEDYI (241 aa)) constitute an ABC transporter domain. ATP is bound at residue 36–43 (GPSGCGKS).

Belongs to the ABC transporter superfamily. Phosphate importer (TC 3.A.1.7) family. The complex is composed of two ATP-binding proteins (PstB), two transmembrane proteins (PstC and PstA) and a solute-binding protein (PstS).

It is found in the cell membrane. It carries out the reaction phosphate(out) + ATP + H2O = ADP + 2 phosphate(in) + H(+). In terms of biological role, part of the ABC transporter complex PstSACB involved in phosphate import. Responsible for energy coupling to the transport system. The protein is Phosphate import ATP-binding protein PstB 2 of Caldanaerobacter subterraneus subsp. tengcongensis (strain DSM 15242 / JCM 11007 / NBRC 100824 / MB4) (Thermoanaerobacter tengcongensis).